A 196-amino-acid chain; its full sequence is Probable malonic semialdehyde reductase RutE (196 aa).

The protein belongs to the nitroreductase family. HadB/RutE subfamily. Requires FMN as cofactor.

The enzyme catalyses 3-hydroxypropanoate + NADP(+) = 3-oxopropanoate + NADPH + H(+). Its function is as follows. May reduce toxic product malonic semialdehyde to 3-hydroxypropionic acid, which is excreted. The protein is Probable malonic semialdehyde reductase RutE of Cronobacter sakazakii (strain ATCC BAA-894) (Enterobacter sakazakii).